The primary structure comprises 409 residues: Elongation factor Tu (409 aa).

Positions 10 to 214 constitute a tr-type G domain; that stretch reads KPHLNIGTIG…AVDSFIPTPE (205 aa). The G1 stretch occupies residues 19–26; it reads GHVDHGKT. 19–26 is a GTP binding site; the sequence is GHVDHGKT. Threonine 26 contacts Mg(2+). Residues 60 to 64 are G2; sequence GITIN. Positions 81 to 84 are G3; that stretch reads DCPG. GTP-binding positions include 81 to 85 and 136 to 139; these read DCPGH and NKED. The G4 stretch occupies residues 136–139; that stretch reads NKED. The tract at residues 174–176 is G5; sequence SGL.

Belongs to the TRAFAC class translation factor GTPase superfamily. Classic translation factor GTPase family. EF-Tu/EF-1A subfamily. As to quaternary structure, monomer.

The protein resides in the cytoplasm. The enzyme catalyses GTP + H2O = GDP + phosphate + H(+). In terms of biological role, GTP hydrolase that promotes the GTP-dependent binding of aminoacyl-tRNA to the A-site of ribosomes during protein biosynthesis. This Nostoc punctiforme (strain ATCC 29133 / PCC 73102) protein is Elongation factor Tu.